Reading from the N-terminus, the 259-residue chain is Insulin-like growth factor-binding protein 1 (259 aa).

Residues 1 to 25 (MSEVPVARVWLVLLLLTVQVGVTAG) form the signal peptide. The 82-residue stretch at 26–107 (APWQCAPCSA…TRGQGACVQE (82 aa)) folds into the IGFBP N-terminal domain. 6 disulfides stabilise this stretch: Cys-30–Cys-57, Cys-33–Cys-59, Cys-41–Cys-60, Cys-48–Cys-63, Cys-71–Cys-84, and Cys-78–Cys-104. The residue at position 45 (Ser-45) is a Phosphoserine; by FAM20C. Ser-120, Ser-123, Ser-126, and Ser-144 each carry phosphoserine. Position 156 is a phosphoserine; by FAM20C (Ser-156). Position 157 is a phosphothreonine; by FAM20C (Thr-157). Tyr-158 carries the post-translational modification Phosphotyrosine. Residues 173-251 (KEPCRIELYR…SPEIRGDPNC (79 aa)) form the Thyroglobulin type-1 domain. 3 disulfide bridges follow: Cys-176-Cys-206, Cys-217-Cys-228, and Cys-230-Cys-251. Thr-193 bears the Phosphothreonine; by FAM20C mark. 2 positions are modified to phosphoserine; by FAM20C: Ser-194 and Ser-199. Ser-242 is subject to Phosphoserine; by FAM20C. The Cell attachment site motif lies at 246-248 (RGD).

In terms of assembly, binds equally well IGF1 and IGF2. Interacts with integrin ITGA5:ITGB1. Interacts with VHL; this interaction inhibits HIF1A degradation. Post-translationally, phosphorylated; probably by casein kinase II. Phosphorylation alters the affinity of the protein for IGFs. In amniotic fluid, the unmodified protein is the most abundant form, while mono-, bi-, tri- and tetraphosphorylated forms are present in decreasing amounts. The phosphorylation state may influence the propensity to proteolysis.

The protein localises to the secreted. Multifunctional protein that plays a critical role in regulating the availability of IGFs such as IGF1 and IGF2 to their receptors and thereby regulates IGF-mediated cellular processes including cell migration, proliferation, differentiation or apoptosis in a cell-type specific manner. Also plays a positive role in cell migration by interacting with integrin ITGA5:ITGB1 through its RGD motif. Mechanistically, binding to integrins leads to activation of focal adhesion kinase/PTK2 and stimulation of the mitogen-activated protein kinase (MAPK) pathway. Regulates cardiomyocyte apoptosis by suppressing HIF-1alpha/HIF1A ubiquitination and subsequent degradation. This chain is Insulin-like growth factor-binding protein 1 (IGFBP1), found in Homo sapiens (Human).